A 502-amino-acid polypeptide reads, in one-letter code: Phenylalanine--tRNA ligase alpha subunit (502 aa).

L-phenylalanine is bound by residues T339, 382 to 384 (QIE), and Y422. Residue E424 coordinates Mg(2+). F448 is a binding site for L-phenylalanine.

This sequence belongs to the class-II aminoacyl-tRNA synthetase family. Phe-tRNA synthetase alpha subunit type 2 subfamily. Tetramer of two alpha and two beta subunits. Mg(2+) serves as cofactor.

It is found in the cytoplasm. The enzyme catalyses tRNA(Phe) + L-phenylalanine + ATP = L-phenylalanyl-tRNA(Phe) + AMP + diphosphate + H(+). This Halobacterium salinarum (strain ATCC 29341 / DSM 671 / R1) protein is Phenylalanine--tRNA ligase alpha subunit.